The primary structure comprises 145 residues: NADH dehydrogenase [ubiquinone] 1 alpha subcomplex subunit 12 (145 aa).

Residue M1 is modified to N-acetylmethionine.

This sequence belongs to the complex I NDUFA12 subunit family. Complex I is composed of 45 different subunits.

The protein resides in the mitochondrion inner membrane. Accessory subunit of the mitochondrial membrane respiratory chain NADH dehydrogenase (Complex I), that is believed not to be involved in catalysis. Complex I functions in the transfer of electrons from NADH to the respiratory chain. The immediate electron acceptor for the enzyme is believed to be ubiquinone. The sequence is that of NADH dehydrogenase [ubiquinone] 1 alpha subcomplex subunit 12 (NDUFA12) from Bos taurus (Bovine).